We begin with the raw amino-acid sequence, 668 residues long: Protein brown (668 aa).

Residues 1-412 lie on the Cytoplasmic side of the membrane; sequence MPMDEGDAQG…TEDLANIRSG (412 aa). Residues 31 to 328 form the ABC transporter domain; that stretch reads YSFWNECRKQ…FTEGFMQPKN (298 aa). 63–70 contacts ATP; the sequence is GGSGAGKT. Residues 413 to 433 form a helical membrane-spanning segment; that stretch reads LIGFGFFMTTAVTLSLMYSGV. Topologically, residues 434–453 are extracellular; sequence GGLTQRTVQDVGGSIFMLSN. A helical membrane pass occupies residues 454 to 474; that stretch reads EMIFTFSYGVTYIFPAALPII. The Cytoplasmic segment spans residues 475-490; that stretch reads RREVAEGTYSLSAYYV. The helical transmembrane segment at 491 to 511 threads the bilayer; the sequence is ALVLSFVPVAFFKGYMFLSVI. Residues 512-524 are Extracellular-facing; the sequence is YASIYYTRGFLLY. The chain crosses the membrane as a helical span at residues 525–545; it reads ITMGFLMSLSAIAAVGYGVFL. Residues 546-561 lie on the Cytoplasmic side of the membrane; the sequence is SSLFETDKMASECAAP. A helical transmembrane segment spans residues 562–582; the sequence is FDLIFLIFGGTYMNVDSVPLL. Topologically, residues 583–637 are extracellular; sequence KYFSLFFYSNEALMYNFWIDIDNIACXVNDEHPCCQTGLEVLQQASFRTADYTFW. The helical transmembrane segment at 638–658 threads the bilayer; the sequence is LDCASLLVVALVFHIVSFTLI. Over 659 to 668 the chain is Cytoplasmic; that stretch reads RRYINRSGYY.

It belongs to the ABC transporter superfamily. ABCG family. Eye pigment precursor importer (TC 3.A.1.204) subfamily. As to quaternary structure, may form a heterodimer with w/white. As to expression, expressed in eyes.

It localises to the membrane. It carries out the reaction guanine(out) + ATP + H2O = guanine(in) + ADP + phosphate + H(+). It catalyses the reaction riboflavin(in) + ATP + H2O = riboflavin(out) + ADP + phosphate + H(+). The catalysed reaction is (6S)-5,6,7,8-tetrahydrofolate(out) + ATP + H2O = (6S)-5,6,7,8-tetrahydrofolate(in) + ADP + phosphate + H(+). ATP-dependent transporter of the ATP-binding cassette (ABC) family which transports various molecules including bioamines, neurotransmitters and metabolic intermediates. In the eye and probably in association with w/white, required for the transport of the eye red pigment precursor, guanine, into pigment cell granules. In Malpighian tubules, involved in guanine uptake. Probably in association with w/white, involved in aging-induced intestinal stem cell proliferation in the midgut by regulating tetrahydrofolate transport. This chain is Protein brown, found in Drosophila virilis (Fruit fly).